The following is a 1158-amino-acid chain: ATP-dependent helicase/deoxyribonuclease subunit B (1158 aa).

Positions 1-275 (MTLHAYLGRA…QYFNQLYRFN (275 aa)) constitute a UvrD-like helicase ATP-binding domain. Residue 8-15 (GRAGTGKS) participates in ATP binding. Positions 269–583 (NQLYRFNNQD…SIGTMDLAKV (315 aa)) constitute a UvrD-like helicase C-terminal domain. Positions 784, 1112, 1115, and 1121 each coordinate [4Fe-4S] cluster.

Belongs to the helicase family. AddB/RexB type 1 subfamily. In terms of assembly, heterodimer of AddA and AddB. It depends on Mg(2+) as a cofactor. Requires [4Fe-4S] cluster as cofactor.

Its function is as follows. The heterodimer acts as both an ATP-dependent DNA helicase and an ATP-dependent, dual-direction single-stranded exonuclease. Recognizes the chi site generating a DNA molecule suitable for the initiation of homologous recombination. The AddB subunit has 5' -&gt; 3' nuclease activity but not helicase activity. The polypeptide is ATP-dependent helicase/deoxyribonuclease subunit B (Staphylococcus aureus (strain COL)).